A 295-amino-acid polypeptide reads, in one-letter code: Light-independent protochlorophyllide reductase iron-sulfur ATP-binding protein (295 aa).

ATP contacts are provided by residues 39–44 (GIGKST) and lysine 68. Serine 43 contributes to the Mg(2+) binding site. The [4Fe-4S] cluster site is built by cysteine 124 and cysteine 158. 209-210 (NR) serves as a coordination point for ATP.

The protein belongs to the NifH/BchL/ChlL family. As to quaternary structure, homodimer. Protochlorophyllide reductase is composed of three subunits; ChlL, ChlN and ChlB. [4Fe-4S] cluster is required as a cofactor.

It carries out the reaction chlorophyllide a + oxidized 2[4Fe-4S]-[ferredoxin] + 2 ADP + 2 phosphate = protochlorophyllide a + reduced 2[4Fe-4S]-[ferredoxin] + 2 ATP + 2 H2O. It functions in the pathway porphyrin-containing compound metabolism; chlorophyll biosynthesis (light-independent). Functionally, component of the dark-operative protochlorophyllide reductase (DPOR) that uses Mg-ATP and reduced ferredoxin to reduce ring D of protochlorophyllide (Pchlide) to form chlorophyllide a (Chlide). This reaction is light-independent. The L component serves as a unique electron donor to the NB-component of the complex, and binds Mg-ATP. This is Light-independent protochlorophyllide reductase iron-sulfur ATP-binding protein from Prochlorococcus marinus (strain AS9601).